The following is a 406-amino-acid chain: Elongation factor Tu (406 aa).

Residues 10–215 form the tr-type G domain; it reads KPHVNVGTIG…AIDEYIPTPV (206 aa). Residues 19-26 form a G1 region; it reads GHVDHGKT. GTP is bound at residue 19-26; sequence GHVDHGKT. Residue Thr-26 participates in Mg(2+) binding. The segment at 61–65 is G2; that stretch reads GITIN. A G3 region spans residues 82-85; the sequence is DCPG. Residues 82 to 86 and 137 to 140 contribute to the GTP site; these read DCPGH and NKVD. The interval 137 to 140 is G4; the sequence is NKVD. Residues 175–177 are G5; sequence SAL.

The protein belongs to the TRAFAC class translation factor GTPase superfamily. Classic translation factor GTPase family. EF-Tu/EF-1A subfamily. In terms of assembly, monomer.

Its subcellular location is the cytoplasm. It catalyses the reaction GTP + H2O = GDP + phosphate + H(+). GTP hydrolase that promotes the GTP-dependent binding of aminoacyl-tRNA to the A-site of ribosomes during protein biosynthesis. This Thermus thermophilus (strain ATCC BAA-163 / DSM 7039 / HB27) protein is Elongation factor Tu.